The chain runs to 62 residues: Conorfamide-Tx1 (62 aa).

Residues 1–19 (MSGRGFLLLALLLLVTVEA) form the signal peptide. Residues 20–26 (TKVEKNK) constitute a propeptide that is removed on maturation. Residue Tyr-46 is modified to Tyrosine amide. The propeptide occupies 47–62 (GRRDMQSPLLSERLRF).

This sequence belongs to the FARP (FMRFamide related peptide) family. In terms of tissue distribution, expressed by the venom duct.

The protein localises to the secreted. In terms of biological role, this peptide does not show activity on human and mouse sensory neuron-specific G-protein coupled receptors MRGPRX1. This is Conorfamide-Tx1 from Conus textile (Cloth-of-gold cone).